The chain runs to 234 residues: UPF0502 protein BPSS1373 (234 aa).

Belongs to the UPF0502 family.

This Burkholderia pseudomallei (strain K96243) protein is UPF0502 protein BPSS1373.